The primary structure comprises 254 residues: Acidic endochitinase (254 aa).

A signal peptide spans 1–23 (MKFWGSVLALSFVVFLFLTGTLA). Glutamate 91 acts as the Proton donor in catalysis. Cysteine 213 and cysteine 245 are joined by a disulfide.

Belongs to the glycosyl hydrolase 19 family. Chitinase class II subfamily.

Its subcellular location is the secreted. The catalysed reaction is Random endo-hydrolysis of N-acetyl-beta-D-glucosaminide (1-&gt;4)-beta-linkages in chitin and chitodextrins.. In terms of biological role, defense against chitin-containing fungal pathogens. The protein is Acidic endochitinase of Petunia hybrida (Petunia).